Consider the following 234-residue polypeptide: Adenosine 5'-phosphosulfate reductase (234 aa).

Residues cysteine 120, cysteine 121, cysteine 203, and cysteine 206 each contribute to the [4Fe-4S] cluster site. Catalysis depends on cysteine 229, which acts as the Nucleophile; cysteine thiosulfonate intermediate.

Belongs to the PAPS reductase family. CysH subfamily. [4Fe-4S] cluster serves as cofactor.

The protein resides in the cytoplasm. It catalyses the reaction [thioredoxin]-disulfide + sulfite + AMP + 2 H(+) = adenosine 5'-phosphosulfate + [thioredoxin]-dithiol. Its pathway is sulfur metabolism; hydrogen sulfide biosynthesis; sulfite from sulfate. Functionally, catalyzes the formation of sulfite from adenosine 5'-phosphosulfate (APS) using thioredoxin as an electron donor. This is Adenosine 5'-phosphosulfate reductase from Bacillus thuringiensis (strain Al Hakam).